The primary structure comprises 139 residues: Hydrogenase maturation factor HypA (139 aa).

H2 contacts Ni(2+). Zn(2+) contacts are provided by C73, C76, C110, and C113.

Belongs to the HypA/HybF family.

Involved in the maturation of [NiFe] hydrogenases. Required for nickel insertion into the metal center of the hydrogenase. This is Hydrogenase maturation factor HypA from Thermococcus onnurineus (strain NA1).